Here is a 156-residue protein sequence, read N- to C-terminus: Ribosomal RNA large subunit methyltransferase H (156 aa).

Residues Leu73, Gly104, and 123 to 128 (LSALTL) each bind S-adenosyl-L-methionine.

This sequence belongs to the RNA methyltransferase RlmH family. As to quaternary structure, homodimer.

The protein resides in the cytoplasm. It carries out the reaction pseudouridine(1915) in 23S rRNA + S-adenosyl-L-methionine = N(3)-methylpseudouridine(1915) in 23S rRNA + S-adenosyl-L-homocysteine + H(+). Specifically methylates the pseudouridine at position 1915 (m3Psi1915) in 23S rRNA. In Shewanella loihica (strain ATCC BAA-1088 / PV-4), this protein is Ribosomal RNA large subunit methyltransferase H.